Consider the following 155-residue polypeptide: Endoribonuclease YbeY (155 aa).

Zn(2+)-binding residues include His114, His118, and His124.

It belongs to the endoribonuclease YbeY family. It depends on Zn(2+) as a cofactor.

The protein resides in the cytoplasm. Functionally, single strand-specific metallo-endoribonuclease involved in late-stage 70S ribosome quality control and in maturation of the 3' terminus of the 16S rRNA. In Cronobacter sakazakii (strain ATCC BAA-894) (Enterobacter sakazakii), this protein is Endoribonuclease YbeY.